A 364-amino-acid polypeptide reads, in one-letter code: tRNA 2-selenouridine synthase (364 aa).

Residues 14 to 137 (LIADTPIIDV…LRQTAIQATI (124 aa)) form the Rhodanese domain. C97 functions as the S-selanylcysteine intermediate in the catalytic mechanism.

It belongs to the SelU family. In terms of assembly, monomer.

It catalyses the reaction 5-methylaminomethyl-2-thiouridine(34) in tRNA + selenophosphate + (2E)-geranyl diphosphate + H2O + H(+) = 5-methylaminomethyl-2-selenouridine(34) in tRNA + (2E)-thiogeraniol + phosphate + diphosphate. The enzyme catalyses 5-methylaminomethyl-2-thiouridine(34) in tRNA + (2E)-geranyl diphosphate = 5-methylaminomethyl-S-(2E)-geranyl-thiouridine(34) in tRNA + diphosphate. The catalysed reaction is 5-methylaminomethyl-S-(2E)-geranyl-thiouridine(34) in tRNA + selenophosphate + H(+) = 5-methylaminomethyl-2-(Se-phospho)selenouridine(34) in tRNA + (2E)-thiogeraniol. It carries out the reaction 5-methylaminomethyl-2-(Se-phospho)selenouridine(34) in tRNA + H2O = 5-methylaminomethyl-2-selenouridine(34) in tRNA + phosphate. Functionally, involved in the post-transcriptional modification of the uridine at the wobble position (U34) of tRNA(Lys), tRNA(Glu) and tRNA(Gln). Catalyzes the conversion of 2-thiouridine (S2U-RNA) to 2-selenouridine (Se2U-RNA). Acts in a two-step process involving geranylation of 2-thiouridine (S2U) to S-geranyl-2-thiouridine (geS2U) and subsequent selenation of the latter derivative to 2-selenouridine (Se2U) in the tRNA chain. In Shigella flexneri, this protein is tRNA 2-selenouridine synthase.